The sequence spans 148 residues: Large ribosomal subunit protein bL9 (148 aa).

This sequence belongs to the bacterial ribosomal protein bL9 family.

In terms of biological role, binds to the 23S rRNA. This chain is Large ribosomal subunit protein bL9, found in Oceanobacillus iheyensis (strain DSM 14371 / CIP 107618 / JCM 11309 / KCTC 3954 / HTE831).